We begin with the raw amino-acid sequence, 432 residues long: Glutamate-1-semialdehyde 2,1-aminomutase (432 aa).

The residue at position 267 (lysine 267) is an N6-(pyridoxal phosphate)lysine.

The protein belongs to the class-III pyridoxal-phosphate-dependent aminotransferase family. HemL subfamily. Homodimer. It depends on pyridoxal 5'-phosphate as a cofactor.

It is found in the cytoplasm. It catalyses the reaction (S)-4-amino-5-oxopentanoate = 5-aminolevulinate. Its pathway is porphyrin-containing compound metabolism; protoporphyrin-IX biosynthesis; 5-aminolevulinate from L-glutamyl-tRNA(Glu): step 2/2. This Syntrophus aciditrophicus (strain SB) protein is Glutamate-1-semialdehyde 2,1-aminomutase.